Reading from the N-terminus, the 280-residue chain is Energy-coupling factor transporter ATP-binding protein EcfA2 (280 aa).

The ABC transporter domain maps to 3-245 (INLQNVSYTY…VSLLEKKQLG (243 aa)). Position 40–47 (40–47 (GHTGSGKS)) interacts with ATP.

This sequence belongs to the ABC transporter superfamily. Energy-coupling factor EcfA family. Forms a stable energy-coupling factor (ECF) transporter complex composed of 2 membrane-embedded substrate-binding proteins (S component), 2 ATP-binding proteins (A component) and 2 transmembrane proteins (T component).

It is found in the cell membrane. ATP-binding (A) component of a common energy-coupling factor (ECF) ABC-transporter complex. Unlike classic ABC transporters this ECF transporter provides the energy necessary to transport a number of different substrates. The sequence is that of Energy-coupling factor transporter ATP-binding protein EcfA2 from Streptococcus pyogenes serotype M1.